The following is a 248-amino-acid chain: Gas vesicle protein J (248 aa).

Residues 121-140 form a 1; truncated repeat; the sequence is DVKDDLYQTSAKIPSPVDTP. Residues 121-245 are 6 X 21 AA approximate tandem repeats; the sequence is DVKDDLYQTS…EEIPSSVDPA (125 aa). 5 repeat units span residues 141–161, 162–182, 183–203, 204–224, and 225–245.

It belongs to the gas vesicle GvpA family. As to quaternary structure, interacts with GvpA.

The protein resides in the gas vesicle. Its function is as follows. A minor component of the gas vesicle, might be involved in nucleating gas vesicle formation. Gas vesicles (GV) are hollow, gas filled proteinaceous nanostructures. During planktonic growth they allow positioning of the organism at a favorable depth for light or nutrient acquisition. The protein is Gas vesicle protein J of Dolichospermum flosaquae (Anabaena flos-aquae).